The primary structure comprises 241 residues: Large ribosomal subunit protein uL1 (241 aa).

The protein belongs to the universal ribosomal protein uL1 family. In terms of assembly, part of the 50S ribosomal subunit.

In terms of biological role, binds directly to 23S rRNA. The L1 stalk is quite mobile in the ribosome, and is involved in E site tRNA release. Its function is as follows. Protein L1 is also a translational repressor protein, it controls the translation of the L11 operon by binding to its mRNA. The sequence is that of Large ribosomal subunit protein uL1 from Streptomyces avermitilis (strain ATCC 31267 / DSM 46492 / JCM 5070 / NBRC 14893 / NCIMB 12804 / NRRL 8165 / MA-4680).